The primary structure comprises 270 residues: tRNA pseudouridine synthase A (270 aa).

D60 functions as the Nucleophile in the catalytic mechanism. Positions 107-111 (FHARF) are RNA binding. A substrate-binding site is contributed by Y118. The tract at residues 168 to 172 (QCQSR) is interaction with tRNA.

Belongs to the tRNA pseudouridine synthase TruA family. As to quaternary structure, homodimer.

It catalyses the reaction uridine(38/39/40) in tRNA = pseudouridine(38/39/40) in tRNA. Formation of pseudouridine at positions 38, 39 and 40 in the anticodon stem and loop of transfer RNAs. The sequence is that of tRNA pseudouridine synthase A from Klebsiella pneumoniae subsp. pneumoniae (strain ATCC 700721 / MGH 78578).